The sequence spans 406 residues: 3-isopropylmalate dehydrogenase, chloroplastic (406 aa).

A chloroplast-targeting transit peptide spans 1–34 (MAAALQTNIRPVKFPATLRALTKQSSPAPFRVRC). The residue at position 71 (Ser-71) is a Phosphoserine. Residue 117 to 130 (GYKWDKNEKHLKPE) participates in NAD(+) binding. Arg-137, Arg-147, Arg-175, and Asp-265 together coordinate substrate. 3 residues coordinate Mg(2+): Asp-265, Asp-289, and Asp-293. 323–335 (GSAPDIAGQDKAN) serves as a coordination point for NAD(+).

Belongs to the isocitrate and isopropylmalate dehydrogenases family. As to quaternary structure, homodimer. It depends on Mg(2+) as a cofactor. Requires Mn(2+) as cofactor.

Its subcellular location is the plastid. It localises to the chloroplast. The catalysed reaction is (2R,3S)-3-isopropylmalate + NAD(+) = 4-methyl-2-oxopentanoate + CO2 + NADH. The protein operates within amino-acid biosynthesis; L-leucine biosynthesis; L-leucine from 3-methyl-2-oxobutanoate: step 3/4. Catalyzes the oxidation of 3-carboxy-2-hydroxy-4-methylpentanoate (3-isopropylmalate) to 3-carboxy-4-methyl-2-oxopentanoate. The product decarboxylates to 4-methyl-2 oxopentanoate. In Brassica napus (Rape), this protein is 3-isopropylmalate dehydrogenase, chloroplastic.